The chain runs to 565 residues: Histone acetyltransferase ESA1 (565 aa).

The tract at residues 1-33 (MAPRTQKSTSGTPGGSGTPGPDEGPQISPGGTY) is disordered. The 80-residue stretch at 38-117 (VVVGCKAFVQ…DEWVSGTRLI (80 aa)) folds into the Tudor-knot domain. Positions 173-217 (AQAAKNVQGESGLETPQKRKADSGDTSTAQSIRADSIDADADGED) are disordered. Positions 284–553 (ARVKNLNKIQ…INPQKLHWTA (270 aa)) constitute an MYST-type HAT domain. Residues 317–342 (LYICEMCLSYFPSPFTLKRHRSKCTL) form a C2HC MYST-type zinc finger. Positions 367–388 (RTWCRNLCLLSKCFLDHKTLYY) match the ESA1-RPD3 motif motif. An N6-acetyllysine; by autocatalysis modification is found at Lys384. Acetyl-CoA is bound by residues 425–429 (ACILT) and 434–440 (QRAGYGK). The active-site Proton donor/acceptor is the Glu460. Acetyl-CoA is bound at residue Ser464.

The protein belongs to the MYST (SAS/MOZ) family. Component of the NuA4 histone acetyltransferase complex. Post-translationally, autoacetylation at Lys-384 is required for proper function.

The protein localises to the nucleus. Its subcellular location is the chromosome. The enzyme catalyses L-lysyl-[histone] + acetyl-CoA = N(6)-acetyl-L-lysyl-[histone] + CoA + H(+). It carries out the reaction L-lysyl-[protein] + acetyl-CoA = N(6)-acetyl-L-lysyl-[protein] + CoA + H(+). The catalysed reaction is 2-hydroxyisobutanoyl-CoA + L-lysyl-[protein] = N(6)-(2-hydroxyisobutanoyl)-L-lysyl-[protein] + CoA + H(+). It catalyses the reaction (2E)-butenoyl-CoA + L-lysyl-[protein] = N(6)-(2E)-butenoyl-L-lysyl-[protein] + CoA + H(+). Its function is as follows. Catalytic component of the NuA4 histone acetyltransferase (HAT) complex which is involved in epigenetic transcriptional activation of selected genes principally by acetylation of nucleosomal histones H4, H3, H2B, H2A and H2A variant H2A.Z. Acetylates histone H4 to form H4K5ac, H4K8ac, H4K12ac and H4K16ac, histone H3 to form H3K14ac, and histone H2A to form H2AK4ac and H2AK7ac. The NuA4 complex is involved in the DNA damage response and is required for chromosome segregation. The NuA4 complex plays a direct role in repair of DNA double-strand breaks (DSBs) through homologous recombination. Recruitment to promoters depends on H3K4me. Also acetylates non-histone proteins. In addition to protein acetyltransferase, can use different acyl-CoA substrates, such as 2-hydroxyisobutanoyl-CoA (2-hydroxyisobutyryl-CoA) or (2E)-butenoyl-CoA (crotonyl-CoA), and is able to mediate protein 2-hydroxyisobutyrylation and crotonylation, respectively. This chain is Histone acetyltransferase ESA1 (ESA1), found in Mycosarcoma maydis (Corn smut fungus).